We begin with the raw amino-acid sequence, 779 residues long: Molybdenum cofactor sulfurase (779 aa).

K247 bears the N6-(pyridoxal phosphate)lysine mark. C409 is a catalytic residue. The MOSC domain occupies 624 to 779; it reads SQSLGLEGVR…LTCGDVIVVS (156 aa). A Phosphoserine modification is found at S732.

Belongs to the class-V pyridoxal-phosphate-dependent aminotransferase family. MOCOS subfamily. Requires pyridoxal 5'-phosphate as cofactor.

The catalysed reaction is Mo-molybdopterin + L-cysteine + AH2 = thio-Mo-molybdopterin + L-alanine + A + H2O. It participates in cofactor biosynthesis; molybdopterin biosynthesis. Sulfurates the molybdenum cofactor. Sulfation of molybdenum is essential for xanthine dehydrogenase (XDH) and aldehyde oxidase (ADO) enzymes in which molybdenum cofactor is liganded by 1 oxygen and 1 sulfur atom in active form. The sequence is that of Molybdenum cofactor sulfurase from Drosophila mojavensis (Fruit fly).